The sequence spans 334 residues: DNA-directed RNA polymerase subunit alpha (334 aa).

The tract at residues 1–231 (MNMIKIEPYI…KQMSIFGVDL (231 aa)) is alpha N-terminal domain (alpha-NTD). Positions 247 to 334 (ELKTLMIKID…NRKLAKLKSN (88 aa)) are alpha C-terminal domain (alpha-CTD).

It belongs to the RNA polymerase alpha chain family. In terms of assembly, homodimer. The RNAP catalytic core consists of 2 alpha, 1 beta/beta' and 1 omega subunit. When a sigma factor is associated with the core the holoenzyme is formed, which can initiate transcription.

It carries out the reaction RNA(n) + a ribonucleoside 5'-triphosphate = RNA(n+1) + diphosphate. Its function is as follows. DNA-dependent RNA polymerase catalyzes the transcription of DNA into RNA using the four ribonucleoside triphosphates as substrates. This chain is DNA-directed RNA polymerase subunit alpha, found in Helicobacter hepaticus (strain ATCC 51449 / 3B1).